The primary structure comprises 71 residues: Small integral membrane protein 31 (71 aa).

The chain crosses the membrane as a helical span at residues 8–28; the sequence is LEMAFILLAFVIFSLFTLASI. Residues 31–71 form a disordered region; sequence TPDDSNEEEEHEKKGREKKRKKSEKKKNCSEEEHRIEAVEL. Residues 46-55 are compositionally biased toward basic residues; sequence REKKRKKSEK. Over residues 56–71 the composition is skewed to basic and acidic residues; the sequence is KKNCSEEEHRIEAVEL. An N-linked (GlcNAc...) asparagine glycan is attached at asparagine 58.

It is found in the membrane. The polypeptide is Small integral membrane protein 31 (Homo sapiens (Human)).